Reading from the N-terminus, the 198-residue chain is Pyridoxal 5'-phosphate synthase subunit PdxT (198 aa).

49–51 is an L-glutamine binding site; that stretch reads GES. Cys-81 functions as the Nucleophile in the catalytic mechanism. L-glutamine contacts are provided by residues Arg-113 and 141–142; that span reads IR. Active-site charge relay system residues include His-177 and Glu-179.

This sequence belongs to the glutaminase PdxT/SNO family. In the presence of PdxS, forms a dodecamer of heterodimers. Only shows activity in the heterodimer.

The enzyme catalyses aldehydo-D-ribose 5-phosphate + D-glyceraldehyde 3-phosphate + L-glutamine = pyridoxal 5'-phosphate + L-glutamate + phosphate + 3 H2O + H(+). It catalyses the reaction L-glutamine + H2O = L-glutamate + NH4(+). It participates in cofactor biosynthesis; pyridoxal 5'-phosphate biosynthesis. Catalyzes the hydrolysis of glutamine to glutamate and ammonia as part of the biosynthesis of pyridoxal 5'-phosphate. The resulting ammonia molecule is channeled to the active site of PdxS. The protein is Pyridoxal 5'-phosphate synthase subunit PdxT of Mycobacterium avium (strain 104).